The primary structure comprises 220 residues: CASP-like protein 1E1 (220 aa).

Residues 1-57 lie on the Cytoplasmic side of the membrane; the sequence is METPTPRVKPGFNGVGVGMGSSVNGSSRRAGYYMGPAGAVAVAGGGRAAAAAPVDGC. The helical transmembrane segment at 58 to 78 threads the bilayer; it reads SVALRVFVLAATLVSAVVMGV. Topologically, residues 79 to 108 are extracellular; that stretch reads DRQTSTIRITVTDALPPLEVPLTANWSYSS. Asn103 carries N-linked (GlcNAc...) asparagine glycosylation. A helical membrane pass occupies residues 109–129; that stretch reads AFVYFVVANAMVCLFSAAALA. Residues 130 to 144 are Cytoplasmic-facing; sequence ACRSRAAMVPVMVGD. A helical transmembrane segment spans residues 145–165; that stretch reads LLALALLYSAVGAAAEFGILG. Residues 166-187 are Extracellular-facing; that stretch reads ERGNSHVRWPKVCNVYGRFCER. Residues 188–208 traverse the membrane as a helical segment; the sequence is AMAAVIVSLIAAFANLVLLML. Residues 209 to 220 are Cytoplasmic-facing; the sequence is NILTIHKSSSYY.

It belongs to the Casparian strip membrane proteins (CASP) family. Homodimer and heterodimers.

It localises to the cell membrane. In Zea mays (Maize), this protein is CASP-like protein 1E1.